The chain runs to 115 residues: Large ribosomal subunit protein bL19 (115 aa).

It belongs to the bacterial ribosomal protein bL19 family.

Functionally, this protein is located at the 30S-50S ribosomal subunit interface and may play a role in the structure and function of the aminoacyl-tRNA binding site. The chain is Large ribosomal subunit protein bL19 from Coxiella burnetii (strain CbuK_Q154) (Coxiella burnetii (strain Q154)).